We begin with the raw amino-acid sequence, 338 residues long: MSRLRLLLSDSHDPLFNLAVEECIFRQMDPNQRVLFLWRNANTVVIGRAQNPWKECNTRRMEEDGVTLARRSSGGGAVFHDLGNSCFTFMAGKPEYDKSVSTAIVLDALTRLGVEAFASGRNDLLVATPDGERKVSGSAYRETHDRGFHHGTLLLDADLGRLANYLNPDPKKLAAKGISSVRSRVANLCELLPGIDHPQVSEALQEAFFSHYGERVQPEHISPEQMPDLPGFAETFARQRSWEWNFGHAPAFSHQLDERFGWGGVELHFDVEKGVIGRAQIFSDSLDPAPLDALAARLPGTAYRADALYDLLRQWRSEFAAREAELEELSRWLLAALR.

The region spanning Asp-29–Val-216 is the BPL/LPL catalytic domain. ATP contacts are provided by residues Arg-71, Gly-76–Phe-79, and Lys-134. Lys-134 contributes to the (R)-lipoate binding site.

It belongs to the LplA family. Monomer.

It is found in the cytoplasm. It catalyses the reaction L-lysyl-[lipoyl-carrier protein] + (R)-lipoate + ATP = N(6)-[(R)-lipoyl]-L-lysyl-[lipoyl-carrier protein] + AMP + diphosphate + H(+). It participates in protein modification; protein lipoylation via exogenous pathway; protein N(6)-(lipoyl)lysine from lipoate: step 1/2. Its pathway is protein modification; protein lipoylation via exogenous pathway; protein N(6)-(lipoyl)lysine from lipoate: step 2/2. In terms of biological role, catalyzes both the ATP-dependent activation of exogenously supplied lipoate to lipoyl-AMP and the transfer of the activated lipoyl onto the lipoyl domains of lipoate-dependent enzymes. The protein is Lipoate-protein ligase A of Aeromonas hydrophila subsp. hydrophila (strain ATCC 7966 / DSM 30187 / BCRC 13018 / CCUG 14551 / JCM 1027 / KCTC 2358 / NCIMB 9240 / NCTC 8049).